A 180-amino-acid chain; its full sequence is MSREVIFTEKEIKERVSELGRQITQDYKDSKNLVLVGILKGSFVFMSDLVRSIHLPNTNVSLEFMSISSYGAETSSSGVIRIMMDLRTSIEGKDVLIIEDIVDSGLTLKHLMELLNHRNPNSLHTAVLLRKKEGLKVEVPVKYMGFDIPMVFIIGYGLDFAENYRELPYLGELKEECYKK.

Residues Lys-40, 99-107, Lys-131, and Asp-159 each bind GMP; that span reads EDIVDSGLT. The active-site Proton acceptor is Asp-103. Asp-159 is a Mg(2+) binding site.

This sequence belongs to the purine/pyrimidine phosphoribosyltransferase family. Mg(2+) is required as a cofactor.

Its subcellular location is the cytoplasm. The enzyme catalyses IMP + diphosphate = hypoxanthine + 5-phospho-alpha-D-ribose 1-diphosphate. It catalyses the reaction GMP + diphosphate = guanine + 5-phospho-alpha-D-ribose 1-diphosphate. It functions in the pathway purine metabolism; IMP biosynthesis via salvage pathway; IMP from hypoxanthine: step 1/1. In terms of biological role, converts guanine to guanosine monophosphate, and hypoxanthine to inosine monophosphate. Transfers the 5-phosphoribosyl group from 5-phosphoribosylpyrophosphate onto the purine. Plays a central role in the generation of purine nucleotides through the purine salvage pathway. This chain is Hypoxanthine-guanine phosphoribosyltransferase (hprT), found in Dictyostelium discoideum (Social amoeba).